The chain runs to 253 residues: GTP cyclohydrolase 1 type 2 homolog (253 aa).

5 residues coordinate a divalent metal cation: H64, H65, D101, H222, and E226.

The protein belongs to the GTP cyclohydrolase I type 2/NIF3 family. In terms of assembly, homohexamer.

In Halobacterium salinarum (strain ATCC 700922 / JCM 11081 / NRC-1) (Halobacterium halobium), this protein is GTP cyclohydrolase 1 type 2 homolog.